The following is a 543-amino-acid chain: Zinc finger protein tra-4 (543 aa).

The segment at 1 to 38 (MDDPNQCTIKQEDSITRPRPTEAPTIQNLKQEPAIEEG) is disordered. A compositionally biased stretch (basic and acidic residues) spans 10–20 (KQEDSITRPRP). 7 C2H2-type zinc fingers span residues 218–241 (VRCK…RDKH), 327–350 (PQCP…AKKH), 381–406 (YVCF…KKFH), 413–436 (FRCS…KMSH), 442–464 (FQCH…ERMH), 470–493 (FECK…RDEH), and 495–518 (YVCA…YEEH).

It belongs to the krueppel C2H2-type zinc-finger protein family. As to quaternary structure, interacts with histone deacetylase hda-1. May interact with nasp-1.

It localises to the nucleus. Probable transcription factor. Promotes normal hermaphrodite (XX) development, in concert with histone deacetylase hda-1 and nasp-1, perhaps as components of a complex. May cooperate with transcription factor tra-1 to repress male-specific genes in hermaphrodites. Synthetic multivulva (synMuv) class B protein, required to repress the induction of vulval development by let-60 Ras signaling. The polypeptide is Zinc finger protein tra-4 (Caenorhabditis elegans).